Consider the following 75-residue polypeptide: Large ribosomal subunit protein bL31 (75 aa).

Belongs to the bacterial ribosomal protein bL31 family. Type A subfamily. Part of the 50S ribosomal subunit.

Functionally, binds the 23S rRNA. This is Large ribosomal subunit protein bL31 from Acidiphilium cryptum (strain JF-5).